A 150-amino-acid chain; its full sequence is Ribonuclease K6 (150 aa).

Residues 1–23 (MVLCFPLLLLLLVLWGPVCPLHA) form the signal peptide. His38 (proton acceptor) is an active-site residue. Cystine bridges form between Cys46–Cys104, Cys60–Cys114, Cys78–Cys129, and Cys85–Cys92. Asn55 is a glycosylation site (N-linked (GlcNAc...) asparagine). Substrate-binding positions include 61–65 (KHQNT) and Lys86. An N-linked (GlcNAc...) asparagine glycan is attached at Asn100. Arg105 contributes to the substrate binding site. His145 serves as the catalytic Proton donor.

This sequence belongs to the pancreatic ribonuclease family. Interacts (via N-terminus) with bacterial lipopolysaccharide (LPS). In terms of tissue distribution, highly expressed in spleen (at protein level). Has little or no expression in healthy kidneys (at protein level). Detected in interstitial leukocytes in infected kidneys (at protein level). Expressed in ureter where it localizes to urothelial and submucosal leukocytes (at protein level). Strong expression in lung and thymus, and lower expression in heart, placenta, pancreas, liver, brain and skeletal muscle. Also expressed in monocytes and neutrophils.

It localises to the secreted. The protein resides in the lysosome. The protein localises to the cytoplasmic granule. In terms of biological role, ribonuclease which shows a preference for the pyrimidines uridine and cytosine. Has potent antibacterial activity against a range of Gram-positive and Gram-negative bacteria, including P.aeruginosa, A.baumanii, M.luteus, S.aureus, E.faecalis, E.faecium, S.saprophyticus and E.coli. Causes loss of bacterial membrane integrity, and also promotes agglutination of Gram-negative bacteria. Probably contributes to urinary tract sterility. Bactericidal activity is independent of RNase activity. This is Ribonuclease K6 (RNASE6) from Homo sapiens (Human).